Consider the following 187-residue polypeptide: Dihydrofolate reductase 2, mitochondrial (187 aa).

The DHFR domain occupies 4–185 (LLNCIVAVSQ…IKYKFEVCEK (182 aa)). NADP(+) contacts are provided by residues Ala10 and 16–22 (GIGKNGD). Residue 31-36 (EFRYFQ) coordinates substrate. An NADP(+)-binding site is contributed by 55–57 (RKT). Arg71 contacts substrate. Residues 77–79 (SRE) and 117–124 (GGSSVYKE) each bind NADP(+).

This sequence belongs to the dihydrofolate reductase family. In terms of tissue distribution, expressed in numerous cell lines.

The protein localises to the mitochondrion. Its subcellular location is the mitochondrion matrix. The protein resides in the mitochondrion inner membrane. The enzyme catalyses (6S)-5,6,7,8-tetrahydrofolate + NADP(+) = 7,8-dihydrofolate + NADPH + H(+). Its pathway is cofactor biosynthesis; tetrahydrofolate biosynthesis; 5,6,7,8-tetrahydrofolate from 7,8-dihydrofolate: step 1/1. Functionally, key enzyme in folate metabolism. Contributes to the de novo mitochondrial thymidylate biosynthesis pathway. Required to prevent uracil accumulation in mtDNA. Binds its own mRNA and that of DHFR. The polypeptide is Dihydrofolate reductase 2, mitochondrial (Homo sapiens (Human)).